Here is a 369-residue protein sequence, read N- to C-terminus: 2-aminoethylphosphonate--pyruvate transaminase (369 aa).

Position 193 is an N6-(pyridoxal phosphate)lysine (K193).

It belongs to the class-V pyridoxal-phosphate-dependent aminotransferase family. PhnW subfamily. In terms of assembly, homodimer. Requires pyridoxal 5'-phosphate as cofactor.

It catalyses the reaction (2-aminoethyl)phosphonate + pyruvate = phosphonoacetaldehyde + L-alanine. In terms of biological role, involved in phosphonate degradation. The polypeptide is 2-aminoethylphosphonate--pyruvate transaminase (Pseudomonas fluorescens (strain ATCC BAA-477 / NRRL B-23932 / Pf-5)).